Reading from the N-terminus, the 141-residue chain is Hemoglobin subunit alpha-D (141 aa).

The region spanning 1–141 (MLTADDKKLI…VAAVLAEKYR (141 aa)) is the Globin domain. Positions 58 and 87 each coordinate heme b.

The protein belongs to the globin family. As to quaternary structure, heterotetramer of two alpha-D chains and two beta chains. Red blood cells.

Functionally, involved in oxygen transport from the lung to the various peripheral tissues. The polypeptide is Hemoglobin subunit alpha-D (HBAD) (Struthio camelus (Common ostrich)).